The sequence spans 185 residues: Ribosome-recycling factor (185 aa).

Belongs to the RRF family.

Its subcellular location is the cytoplasm. In terms of biological role, responsible for the release of ribosomes from messenger RNA at the termination of protein biosynthesis. May increase the efficiency of translation by recycling ribosomes from one round of translation to another. In Wolbachia sp. subsp. Drosophila simulans (strain wRi), this protein is Ribosome-recycling factor.